Here is a 364-residue protein sequence, read N- to C-terminus: 3-isopropylmalate dehydrogenase (364 aa).

76–89 (GPKWDGNAPEKRPE) is a binding site for NAD(+). Arg-96, Arg-106, Arg-134, and Asp-223 together coordinate substrate. Residues Asp-223, Asp-247, and Asp-251 each coordinate Mg(2+). 281–293 (GSAPDIAGTGAAN) contacts NAD(+).

This sequence belongs to the isocitrate and isopropylmalate dehydrogenases family. LeuB type 1 subfamily. As to quaternary structure, homodimer. The cofactor is Mg(2+). Requires Mn(2+) as cofactor.

It is found in the cytoplasm. The catalysed reaction is (2R,3S)-3-isopropylmalate + NAD(+) = 4-methyl-2-oxopentanoate + CO2 + NADH. Its pathway is amino-acid biosynthesis; L-leucine biosynthesis; L-leucine from 3-methyl-2-oxobutanoate: step 3/4. In terms of biological role, catalyzes the oxidation of 3-carboxy-2-hydroxy-4-methylpentanoate (3-isopropylmalate) to 3-carboxy-4-methyl-2-oxopentanoate. The product decarboxylates to 4-methyl-2 oxopentanoate. This chain is 3-isopropylmalate dehydrogenase, found in Shouchella clausii (strain KSM-K16) (Alkalihalobacillus clausii).